A 283-amino-acid polypeptide reads, in one-letter code: uncharacterized protein (283 aa).

Asn-15 is a glycosylation site (N-linked (GlcNAc...) asparagine). The PQ-loop 1 domain occupies Asn-15–Gln-81. 6 helical membrane-spanning segments follow: residues Ser-19–Ile-39, Glu-48–Tyr-68, Ala-108–Leu-128, Val-138–Leu-158, Val-170–Leu-190, and Gly-206–Leu-226. The PQ-loop 2 domain occupies Ala-149–Asp-204. N-linked (GlcNAc...) asparagine glycosylation occurs at Asn-228.

The protein localises to the membrane. This is an uncharacterized protein from Schizosaccharomyces pombe (strain 972 / ATCC 24843) (Fission yeast).